A 601-amino-acid polypeptide reads, in one-letter code: Glutamine--tRNA ligase (601 aa).

Residues 76 to 86 (PEPNGYLHIGH) carry the 'HIGH' region motif. Residues 77 to 79 (EPN) and 83 to 89 (HIGHAKS) each bind ATP. L-glutamine contacts are provided by Asp109 and Tyr253. Residues Thr272, 301–302 (RL), and 309–311 (MSK) contribute to the ATP site. The 'KMSKS' region motif lies at 308-312 (VMSKR).

It belongs to the class-I aminoacyl-tRNA synthetase family. Monomer.

It localises to the cytoplasm. It carries out the reaction tRNA(Gln) + L-glutamine + ATP = L-glutaminyl-tRNA(Gln) + AMP + diphosphate. In Rhodopirellula baltica (strain DSM 10527 / NCIMB 13988 / SH1), this protein is Glutamine--tRNA ligase.